A 389-amino-acid polypeptide reads, in one-letter code: MEAAAAAAAEEEAGNPDGVEGAAVAAVAPEAAAEGPSEPNAGEASREPDAGQASREPGAAGPSREPDVAGPSREPDAAGPSREPGAAGGSREPGAAGGSRQPVPDAAQLAVVPYVEDIDRYLRSLEAEQTRRPMINYVQEIQGGIINMDVRGILVDWMADVAYVFNLQEETLHHAVSYVDRFLSKIAFPGDKLKLLGTTALFVASKYEEIHPPHVRNFSAVTVNTYTTQQVSKMELDILRFLNFDVGSPTVITFLRKFLTSCCGGNNSSNRKLELMCNYLAELSLLDDYYIRFLPSIVAAACLFVGKFTLNPNTRPWFGSVSTITPPENIKGGVEKYMVSRIYMCVFDLPMLFLMETWSSSGVSNHTKLQLKQNMMELPIENPTFISAS.

The segment at 1-103 (MEAAAAAAAE…GAAGGSRQPV (103 aa)) is disordered. Low complexity predominate over residues 19–43 (VEGAAVAAVAPEAAAEGPSEPNAGE).

The protein belongs to the cyclin family. Cyclin F subfamily.

The protein is Putative cyclin-F3-1 (CYCF3-1) of Oryza sativa subsp. japonica (Rice).